We begin with the raw amino-acid sequence, 224 residues long: Biotin transport ATP-binding protein BioM (224 aa).

An ABC transporter domain is found at 3-224 (IQFESAGVSF…AIARYREIAA (222 aa)). Position 34–41 (34–41 (GLNGSGKT)) interacts with ATP.

Belongs to the ABC transporter superfamily. Part of a biotin transporter complex composed of BioM, BioN and BioY.

The protein localises to the cell inner membrane. In terms of biological role, involved in biotin uptake. This chain is Biotin transport ATP-binding protein BioM (bioM), found in Rhizobium etli (strain ATCC 51251 / DSM 11541 / JCM 21823 / NBRC 15573 / CFN 42).